The primary structure comprises 204 residues: Inactive ribonuclease-like protein 9 (204 aa).

An N-terminal signal peptide occupies residues 1–26; it reads MMRTLITTHPLLLLLLLQQLLQPVQF. 3 cysteine pairs are disulfide-bonded: C97–C152, C115–C167, and C122–C129. Residues N130 and N142 are each glycosylated (N-linked (GlcNAc...) asparagine).

Belongs to the pancreatic ribonuclease family.

Its subcellular location is the secreted. Functionally, does not exhibit any ribonuclease activity. In Papio anubis (Olive baboon), this protein is Inactive ribonuclease-like protein 9 (RNASE9).